We begin with the raw amino-acid sequence, 329 residues long: Porphobilinogen deaminase (329 aa).

Cys-250 carries the S-(dipyrrolylmethanemethyl)cysteine modification.

Belongs to the HMBS family. In terms of assembly, monomer. Requires dipyrromethane as cofactor.

The catalysed reaction is 4 porphobilinogen + H2O = hydroxymethylbilane + 4 NH4(+). Its pathway is porphyrin-containing compound metabolism; protoporphyrin-IX biosynthesis; coproporphyrinogen-III from 5-aminolevulinate: step 2/4. Its function is as follows. Tetrapolymerization of the monopyrrole PBG into the hydroxymethylbilane pre-uroporphyrinogen in several discrete steps. The sequence is that of Porphobilinogen deaminase from Burkholderia pseudomallei (strain 668).